Reading from the N-terminus, the 197-residue chain is TM2 domain-containing protein 1 (197 aa).

An N-terminal signal peptide occupies residues 1–32 (MAFRWRSLMRFRSTTRLLLLFTFCLTVIHSLG). The Extracellular segment spans residues 33–105 (NDVDSCDKLH…GFNKTIPCRN (73 aa)). Residues N77, N84, N98, and N105 are each glycosylated (N-linked (GlcNAc...) asparagine). Residues 106–126 (VSGYSYKVAVALSLFLGWIGA) form a helical membrane-spanning segment. A TM2 domain is found at 108–155 (GYSYKVAVALSLFLGWIGADRFYLGYPALGLLKFCTVGFCGIGSLVDF). The Cytoplasmic segment spans residues 127 to 143 (DRFYLGYPALGLLKFCT). Residues 144 to 164 (VGFCGIGSLVDFMLISMQIVG) traverse the membrane as a helical segment. Topologically, residues 165–197 (PSDGSDYIVDYYGARLTRLSITNETYRRMQPSP) are extracellular. The N-linked (GlcNAc...) asparagine glycan is linked to N187.

It belongs to the TM2 family.

The protein resides in the membrane. This Danio rerio (Zebrafish) protein is TM2 domain-containing protein 1 (tm2d1).